Consider the following 382-residue polypeptide: Succinate--CoA ligase [ADP-forming] subunit beta (382 aa).

ATP-binding positions include K46, G53–G55, V95, and E100. Mg(2+)-binding residues include N192 and D206. Residues N257 and G314–T316 contribute to the substrate site.

The protein belongs to the succinate/malate CoA ligase beta subunit family. In terms of assembly, heterotetramer of two alpha and two beta subunits. The cofactor is Mg(2+).

It carries out the reaction succinate + ATP + CoA = succinyl-CoA + ADP + phosphate. The enzyme catalyses GTP + succinate + CoA = succinyl-CoA + GDP + phosphate. Its pathway is carbohydrate metabolism; tricarboxylic acid cycle; succinate from succinyl-CoA (ligase route): step 1/1. Its function is as follows. Succinyl-CoA synthetase functions in the citric acid cycle (TCA), coupling the hydrolysis of succinyl-CoA to the synthesis of either ATP or GTP and thus represents the only step of substrate-level phosphorylation in the TCA. The beta subunit provides nucleotide specificity of the enzyme and binds the substrate succinate, while the binding sites for coenzyme A and phosphate are found in the alpha subunit. The sequence is that of Succinate--CoA ligase [ADP-forming] subunit beta from Bacteroides fragilis (strain ATCC 25285 / DSM 2151 / CCUG 4856 / JCM 11019 / LMG 10263 / NCTC 9343 / Onslow / VPI 2553 / EN-2).